The sequence spans 46 residues: Sperm protamine P1 (46 aa).

This sequence belongs to the protamine P1 family. As to expression, testis.

The protein localises to the nucleus. It localises to the chromosome. Functionally, protamines substitute for histones in the chromatin of sperm during the haploid phase of spermatogenesis. They compact sperm DNA into a highly condensed, stable and inactive complex. The polypeptide is Sperm protamine P1 (PRM1) (Glauconycteris beatrix (Beatrix's bat)).